Reading from the N-terminus, the 146-residue chain is Large ribosomal subunit protein mL41 (146 aa).

The transit peptide at 1–16 (MKGSPISQFSKTSINA) directs the protein to the mitochondrion.

The protein belongs to the mitochondrion-specific ribosomal protein mL41 family. In terms of assembly, component of the mitochondrial large ribosomal subunit (mt-LSU). Mature yeast 74S mitochondrial ribosomes consist of a small (37S) and a large (54S) subunit. The 37S small subunit contains a 15S ribosomal RNA (15S mt-rRNA) and 34 different proteins. The 54S large subunit contains a 21S rRNA (21S mt-rRNA) and 46 different proteins.

Its subcellular location is the mitochondrion. Component of the mitochondrial ribosome (mitoribosome), a dedicated translation machinery responsible for the synthesis of mitochondrial genome-encoded proteins, including at least some of the essential transmembrane subunits of the mitochondrial respiratory chain. The mitoribosomes are attached to the mitochondrial inner membrane and translation products are cotranslationally integrated into the membrane. In Saccharomyces cerevisiae (strain ATCC 204508 / S288c) (Baker's yeast), this protein is Large ribosomal subunit protein mL41 (MRPL27).